A 488-amino-acid chain; its full sequence is MSDFIASKEDDYSKWYLDIVQKAKLADYSPVKGCMVIMPYGYSIWSKIQSILDKKFKETGHENAYFPMLIPYSFLEREKDHIDGFSPEFAIIKDAGGESLAEPLVLRPTSETIIWNMYSKWIKSYRDLPLKINQWANVVRWEKRTRPFLRTTEFLWQEGHTAHATEEEALEETLLILDVYKRFIEDYLAIPVFCGKKSEKEKFAGAVSTYSIEALMQDKKALQAATSHYLGLNFAKAFDVKFQDKDGKMRHVFASSWGVSTRLIGALIMVHSDEKGLVLPPRIAPIEIIVIPIFKKEDEINKKILDYCDCVVDALKKAGFRVEIDKDVRSSPGFRFSSAEFKGIPIRLEVGINDVLLNSVTISRRDKDRKFKYQISLDSLVSKVKVELDLMQKDLFQRALNFRILNTKEIFRSSKDSYETFKAYVNDYSGFVLSCWCGSLNCENIIKNETKATIRCIPDDFKARDLTGMTCIYCSSKAKYFVLFAKSY.

The protein belongs to the class-II aminoacyl-tRNA synthetase family. ProS type 3 subfamily. As to quaternary structure, homodimer.

The protein resides in the cytoplasm. It catalyses the reaction tRNA(Pro) + L-proline + ATP = L-prolyl-tRNA(Pro) + AMP + diphosphate. Its function is as follows. Catalyzes the attachment of proline to tRNA(Pro) in a two-step reaction: proline is first activated by ATP to form Pro-AMP and then transferred to the acceptor end of tRNA(Pro). This Borreliella burgdorferi (strain ZS7) (Borrelia burgdorferi) protein is Proline--tRNA ligase.